A 97-amino-acid polypeptide reads, in one-letter code: Large ribosomal subunit protein bL31B (97 aa).

This sequence belongs to the bacterial ribosomal protein bL31 family. Type B subfamily. As to quaternary structure, part of the 50S ribosomal subunit.

This Mycolicibacterium paratuberculosis (strain ATCC BAA-968 / K-10) (Mycobacterium paratuberculosis) protein is Large ribosomal subunit protein bL31B (rpmE2).